A 197-amino-acid chain; its full sequence is Xanthine phosphoribosyltransferase (197 aa).

Positions 20 and 27 each coordinate xanthine. 128 to 132 (ANGQA) provides a ligand contact to 5-phospho-alpha-D-ribose 1-diphosphate. Xanthine is bound at residue Lys-156.

It belongs to the purine/pyrimidine phosphoribosyltransferase family. Xpt subfamily. In terms of assembly, homodimer.

It localises to the cytoplasm. The enzyme catalyses XMP + diphosphate = xanthine + 5-phospho-alpha-D-ribose 1-diphosphate. Its pathway is purine metabolism; XMP biosynthesis via salvage pathway; XMP from xanthine: step 1/1. Its function is as follows. Converts the preformed base xanthine, a product of nucleic acid breakdown, to xanthosine 5'-monophosphate (XMP), so it can be reused for RNA or DNA synthesis. This chain is Xanthine phosphoribosyltransferase, found in Lactococcus lactis subsp. cremoris (strain MG1363).